A 391-amino-acid chain; its full sequence is UPF0229 protein BCA_0588 (391 aa).

The span at 1-16 shows a compositional bias: polar residues; sequence MGEENQPNYTISQENW. 2 disordered regions span residues 1 to 31 and 80 to 117; these read MGEENQPNYTISQENWSLHRKGYDDQQRHQE and HVGQGNGDSKVGDVVARDGSGGQKQKGPGKGQGAGDAA. Positions 21–31 are enriched in basic and acidic residues; sequence KGYDDQQRHQE. Over residues 98 to 115 the composition is skewed to gly residues; the sequence is GSGGQKQKGPGKGQGAGD.

This sequence belongs to the UPF0229 family.

This Bacillus cereus (strain 03BB102) protein is UPF0229 protein BCA_0588.